A 236-amino-acid polypeptide reads, in one-letter code: GLIPR1-like protein 1 (236 aa).

The N-terminal stretch at 1 to 27 (MALKKKLNFLWTLVLYLIASRLPKAFG) is a signal peptide. One can recognise an SCP domain in the interval 46–178 (LNIHNELRRK…FSAGLFVCNY (133 aa)). An N-linked (GlcNAc...) asparagine glycan is attached at asparagine 126.

Belongs to the CRISP family. In terms of assembly, part of a oolemmal binding multimeric complex (IZUMO1 complex) composed at least of IZUMO1 and GLIPR1L1; the complex assemblage is influenced by the maturation status of the male germ cell. Interacts with IZUMO1. In terms of processing, N-glycosylated. N-glycosylation decreases during the transit in the caput. Expressed in testis (at protein level). Little or no expression in other tissues tested.

Its subcellular location is the cytoplasmic vesicle. It localises to the secretory vesicle. The protein localises to the acrosome. The protein resides in the cell membrane. It is found in the membrane raft. Its subcellular location is the secreted. Required for optimal fertilization at the stage of sperm-oocyte fusion, plays a role in optimizing acrosome function, the translocation of IZUMO1 during the acrosome reaction and the fertilization process. Component of epididymosomes, one type of membranous microvesicules which mediate the transfer of lipids and proteins to spermatozoa plasma membrane during epididymal maturation. Also component of the CD9-positive microvesicules found in the cauda region. The polypeptide is GLIPR1-like protein 1 (Mus musculus (Mouse)).